We begin with the raw amino-acid sequence, 45 residues long: Movement protein p5 (45 aa).

Residues 8–28 (ILLLVVDFVFVIILLLVLTFV) form a helical membrane-spanning segment.

It is found in the host rough endoplasmic reticulum membrane. In terms of biological role, transports viral genome to neighboring plant cells directly through plasmosdesmata, without any budding. The movement protein allows efficient cell to cell propagation, by bypassing the host cell wall barrier. Two movement proteins, p6, Hsp70h and three structural proteins, CP, CPm, and P64 are essential for cell-cell movement. Also plays a role in virion formation. Together with CPm and p64, encapsidates the 5'-terminal portion of the viral genome. The protein is Movement protein p5 of Grapevine leafroll-associated virus 3 (isolate United States/NY1) (GLRaV-3).